The chain runs to 2833 residues: Reticulocyte-binding protein 1 (2833 aa).

An N-terminal signal peptide occupies residues 1–22 (MKRGICLAALLCLFNYLGAGHG). Over residues 75-91 (ETDNASGKDAEGSRPSH) the composition is skewed to basic and acidic residues. 3 disordered regions span residues 75 to 95 (ETDNASGKDAEGSRPSHDSSF), 112 to 133 (HVKESTPHSTTRESTEKGKENE), and 819 to 860 (KHKQ…NFSR). Basic and acidic residues predominate over residues 819–836 (KHKQNRSEKEEEYFKNES). Acidic residues predominate over residues 837 to 849 (VEEDLSREETEEQ). The Cell attachment site signature appears at 2563–2565 (RGD). The disordered stretch occupies residues 2619–2755 (EMNSKKSAIE…GTYQDTSNSS (137 aa)). Basic and acidic residues-rich tracts occupy residues 2621–2633 (NSKKSAIEKEKTA) and 2640–2652 (ENNRREEEERARV). Residues 2655–2670 (MSMNNDPTQSETTHSE) are compositionally biased toward polar residues. Acidic residues predominate over residues 2706 to 2720 (LEEEETTAPMEETEM). The span at 2731–2742 (TRSDEPDMHTEN) shows a compositional bias: basic and acidic residues. Polar residues predominate over residues 2743-2755 (TQDGTYQDTSNSS).

As to quaternary structure, homodimer.

The protein localises to the membrane. In terms of biological role, involved in reticulocyte adhesion. Specifically binds to human reticulocyte cells. The protein is Reticulocyte-binding protein 1 (RBP1) of Plasmodium vivax (strain Belem).